The primary structure comprises 1167 residues: C5a peptidase (1167 aa).

Positions 1–31 are cleaved as a signal peptide; the sequence is MRKKQKLPFDKLAIALMSTSILLNAQSDIKA. A compositionally biased stretch (polar residues) spans 34–52; it reads VTEDTPVTEQAVETPQPTA. Residues 34-73 form a disordered region; the sequence is VTEDTPVTEQAVETPQPTAVSEEVPSSKETKTPQTPDDAE. The region spanning 99–581 is the Peptidase S8 domain; that stretch reads KATIRDLNDP…AGAVDAKKAS (483 aa). Catalysis depends on charge relay system residues Asp130, His193, and Ser512. The tract at residues 1029 to 1133 is disordered; that stretch reads EGHSNKPEQD…RDQLPTTNDK (105 aa). A run of 4 repeats spans residues 1034 to 1050, 1051 to 1067, 1068 to 1084, and 1085 to 1101. The interval 1034 to 1101 is 4 X 17 AA tandem repeats; that stretch reads KPEQDGSGQT…GQTPGKTPQK (68 aa). Basic and acidic residues-rich tracts occupy residues 1044-1071 and 1078-1090; these read PDKK…KPEQ and PDKK…EKDS. 2 stretches are compositionally biased toward polar residues: residues 1092–1106 and 1120–1130; these read GQTP…QPSR and KASTRDQLPTT. The LPXTG sorting signal signature appears at 1127 to 1131; that stretch reads LPTTN. Thr1130 carries the pentaglycyl murein peptidoglycan amidated threonine modification. Residues 1131–1167 constitute a propeptide, removed by sortase; the sequence is NDKDTNRLHLLKLVMTTFFFGLVAHIFKTKRQKETKK.

It belongs to the peptidase S8 family. Cleaved by SpeB protease; leading to its degradation. Degradation by SpeB is probably strictly regulated to preserve integrity of C5a peptidase.

The protein localises to the secreted. It is found in the cell wall. It carries out the reaction The primary cleavage site is at 67-His-|-Lys-68 in human C5a with a minor secondary cleavage site at 58-Ala-|-Ser-59.. This virulence factor of S.pyogenes specifically cleaves the human serum chemotaxin C5a at '68-Lys-|-Asp-69' bond near its C-terminus, destroying its ability to serve as a chemoattractant. The polypeptide is C5a peptidase (scpA) (Streptococcus pyogenes).